Consider the following 795-residue polypeptide: Inactive N-acetylated-alpha-linked acidic dipeptidase-like protein 2 (795 aa).

A disordered region spans residues 1 to 38; it reads MGENEASLPNTSLQGKKMAYQKVHADQRAPGHSQYLDN. Over 1–121 the chain is Cytoplasmic; it reads MGENEASLPN…RSAPKSNRCN (121 aa). Ser92 is subject to Phosphoserine. Residues 122–142 form a helical; Signal-anchor for type II membrane protein membrane-spanning segment; that stretch reads FCHVLKILCTATILFIFGILI. Over 143–795 the chain is Extracellular; that stretch reads GYYVHTNCPS…VFKSVLDGKN (653 aa). Residues Asn295, Asn373, Asn534, and Asn759 are each glycosylated (N-linked (GlcNAc...) asparagine).

It belongs to the peptidase M28 family. M28B subfamily. In terms of tissue distribution, expressed at higher level in kidney and placenta. In embryo, it is mainly confined to duodenal and stomach endoderm, mesonephros, metanephros and pancreas.

The protein resides in the membrane. Functionally, may be catalytically inactive. In Homo sapiens (Human), this protein is Inactive N-acetylated-alpha-linked acidic dipeptidase-like protein 2 (NAALADL2).